We begin with the raw amino-acid sequence, 332 residues long: L-lactate dehydrogenase (332 aa).

Residues 29 to 57 and arginine 99 each bind NAD(+); that span reads GQVG…CADK. The substrate site is built by arginine 106, asparagine 138, and arginine 169. Position 138 (asparagine 138) interacts with NAD(+). The Proton acceptor role is filled by histidine 193. Threonine 248 serves as a coordination point for substrate.

Belongs to the LDH/MDH superfamily. LDH family. In terms of assembly, homotetramer.

The protein resides in the cytoplasm. It carries out the reaction (S)-lactate + NAD(+) = pyruvate + NADH + H(+). The protein operates within fermentation; pyruvate fermentation to lactate; (S)-lactate from pyruvate: step 1/1. The sequence is that of L-lactate dehydrogenase from Drosophila melanogaster (Fruit fly).